Reading from the N-terminus, the 34-residue chain is Phospholipase A2 (34 aa).

His18 is a catalytic residue. Residue Asp19 participates in Ca(2+) binding.

This sequence belongs to the phospholipase A2 family. Group I subfamily. D49 sub-subfamily. Requires Ca(2+) as cofactor. In terms of processing, contains 7 disulfide bonds. In terms of tissue distribution, expressed by the venom gland.

The protein localises to the secreted. The enzyme catalyses a 1,2-diacyl-sn-glycero-3-phosphocholine + H2O = a 1-acyl-sn-glycero-3-phosphocholine + a fatty acid + H(+). Functionally, snake venom phospholipase A2 (PLA2) that strongly inhibits platelet aggregation and has a strong anticoagulant activity. PLA2 catalyzes the calcium-dependent hydrolysis of the 2-acyl groups in 3-sn-phosphoglycerides. This is Phospholipase A2 from Pseudechis papuanus (Papuan black snake).